The chain runs to 407 residues: RING-H2 finger protein ATL43 (407 aa).

The N-terminal stretch at 1-22 is a signal peptide; the sequence is MSSSSLILLFSTLSLFLNVSLA. The helical transmembrane segment at 57-77 threads the bilayer; it reads GIAVVIAVLTAFFSLTFLLLL. The RING-type; atypical zinc-finger motif lies at 146–188; it reads CAVCLARFEPTEVLRLLPKCKHAFHVECVDTWLDAHSTCPLCR.

Belongs to the RING-type zinc finger family. ATL subfamily.

The protein resides in the membrane. The enzyme catalyses S-ubiquitinyl-[E2 ubiquitin-conjugating enzyme]-L-cysteine + [acceptor protein]-L-lysine = [E2 ubiquitin-conjugating enzyme]-L-cysteine + N(6)-ubiquitinyl-[acceptor protein]-L-lysine.. It functions in the pathway protein modification; protein ubiquitination. The sequence is that of RING-H2 finger protein ATL43 (ATL43) from Arabidopsis thaliana (Mouse-ear cress).